We begin with the raw amino-acid sequence, 312 residues long: Deoxyribonuclease Tat-D (312 aa).

A divalent metal cation-binding residues include Glu-124, His-161, His-187, and Asp-235.

The protein belongs to the metallo-dependent hydrolases superfamily. TatD-type hydrolase family. It depends on a divalent metal cation as a cofactor.

The protein resides in the cytoplasm. It is found in the nucleus. Functionally, has both endo- and exonuclease activities. Incises double-stranded DNA without obvious specificity via its endonuclease activity and excises the DNA from the 3'-to 5'-end by its exonuclease activity. May have a role in apoptosis. This is Deoxyribonuclease Tat-D from Schizosaccharomyces pombe (strain 972 / ATCC 24843) (Fission yeast).